The following is a 158-amino-acid chain: NAD(P)H-quinone oxidoreductase subunit J, chloroplastic (158 aa).

This sequence belongs to the complex I 30 kDa subunit family. NDH is composed of at least 16 different subunits, 5 of which are encoded in the nucleus.

The protein resides in the plastid. Its subcellular location is the chloroplast thylakoid membrane. It carries out the reaction a plastoquinone + NADH + (n+1) H(+)(in) = a plastoquinol + NAD(+) + n H(+)(out). It catalyses the reaction a plastoquinone + NADPH + (n+1) H(+)(in) = a plastoquinol + NADP(+) + n H(+)(out). Its function is as follows. NDH shuttles electrons from NAD(P)H:plastoquinone, via FMN and iron-sulfur (Fe-S) centers, to quinones in the photosynthetic chain and possibly in a chloroplast respiratory chain. The immediate electron acceptor for the enzyme in this species is believed to be plastoquinone. Couples the redox reaction to proton translocation, and thus conserves the redox energy in a proton gradient. This chain is NAD(P)H-quinone oxidoreductase subunit J, chloroplastic, found in Solanum tuberosum (Potato).